The sequence spans 129 residues: Protein Turandot C (129 aa).

Positions 1–21 are cleaved as a signal peptide; it reads MNASISLLCFALLLISPFCLG.

This sequence belongs to the Turandot family.

It is found in the secreted. Functionally, a humoral factor that may play a role in stress tolerance. The sequence is that of Protein Turandot C from Drosophila sechellia (Fruit fly).